We begin with the raw amino-acid sequence, 128 residues long: Large ribosomal subunit protein bL20c (128 aa).

The protein belongs to the bacterial ribosomal protein bL20 family.

Its subcellular location is the plastid. It localises to the chloroplast. Its function is as follows. Binds directly to 23S ribosomal RNA and is necessary for the in vitro assembly process of the 50S ribosomal subunit. It is not involved in the protein synthesizing functions of that subunit. The protein is Large ribosomal subunit protein bL20c of Nicotiana sylvestris (Wood tobacco).